The sequence spans 313 residues: Methionyl-tRNA formyltransferase (313 aa).

110 to 113 (SLLP) provides a ligand contact to (6S)-5,6,7,8-tetrahydrofolate.

The protein belongs to the Fmt family.

It carries out the reaction L-methionyl-tRNA(fMet) + (6R)-10-formyltetrahydrofolate = N-formyl-L-methionyl-tRNA(fMet) + (6S)-5,6,7,8-tetrahydrofolate + H(+). Attaches a formyl group to the free amino group of methionyl-tRNA(fMet). The formyl group appears to play a dual role in the initiator identity of N-formylmethionyl-tRNA by promoting its recognition by IF2 and preventing the misappropriation of this tRNA by the elongation apparatus. This chain is Methionyl-tRNA formyltransferase, found in Enterococcus faecalis (strain ATCC 700802 / V583).